The primary structure comprises 252 residues: RNA-binding protein 2 (252 aa).

Disordered regions lie at residues 1–34 and 232–252; these read MADGFWNRQQQHLPPPGGMLKRPRTEYDTAPSGV and RLQFSRSPGRRSGGPGPRGKR. An RRM domain is found at 152–238; the sequence is STLYVEGLPS…SYLRLQFSRS (87 aa). Gly residues predominate over residues 242–252; the sequence is RSGGPGPRGKR.

Functionally, probable RNA-binding protein. The chain is RNA-binding protein 2 from Medicago truncatula (Barrel medic).